The chain runs to 323 residues: tRNA U34 carboxymethyltransferase (323 aa).

Carboxy-S-adenosyl-L-methionine is bound by residues Lys-91, Trp-105, Lys-110, Gly-130, 152-154 (DPT), 181-182 (IE), Met-196, Tyr-200, and Arg-315.

The protein belongs to the class I-like SAM-binding methyltransferase superfamily. CmoB family. In terms of assembly, homotetramer.

The catalysed reaction is carboxy-S-adenosyl-L-methionine + 5-hydroxyuridine(34) in tRNA = 5-carboxymethoxyuridine(34) in tRNA + S-adenosyl-L-homocysteine + H(+). Functionally, catalyzes carboxymethyl transfer from carboxy-S-adenosyl-L-methionine (Cx-SAM) to 5-hydroxyuridine (ho5U) to form 5-carboxymethoxyuridine (cmo5U) at position 34 in tRNAs. The polypeptide is tRNA U34 carboxymethyltransferase (Salmonella paratyphi B (strain ATCC BAA-1250 / SPB7)).